A 444-amino-acid chain; its full sequence is DNA primase DnaG (444 aa).

One can recognise a Toprim domain in the interval 173-250 (DAILIVEGRS…YVTRAPRGLE (78 aa)). Mg(2+) is bound by residues glutamate 179, aspartate 221, and aspartate 223. A disordered region spans residues 302-354 (VTSSVNKTDKYSQKNESKQFKQQKNENKQVKDNSKEKTQKSTEKHNETEETHL). Residues 308–354 (KTDKYSQKNESKQFKQQKNENKQVKDNSKEKTQKSTEKHNETEETHL) show a composition bias toward basic and acidic residues.

This sequence belongs to the archaeal DnaG primase family. In terms of assembly, forms a ternary complex with MCM helicase and DNA. Component of the archaeal exosome complex. The cofactor is Mg(2+).

It carries out the reaction ssDNA + n NTP = ssDNA/pppN(pN)n-1 hybrid + (n-1) diphosphate.. In terms of biological role, RNA polymerase that catalyzes the synthesis of short RNA molecules used as primers for DNA polymerase during DNA replication. Also part of the exosome, which is a complex involved in RNA degradation. Acts as a poly(A)-binding protein that enhances the interaction between heteromeric, adenine-rich transcripts and the exosome. The sequence is that of DNA primase DnaG from Methanosphaera stadtmanae (strain ATCC 43021 / DSM 3091 / JCM 11832 / MCB-3).